The chain runs to 325 residues: Cell wall mannoprotein PIR3 (325 aa).

The signal sequence occupies residues 1–18 (MQYKKPLVVSALAATSLA). The propeptide occupies 19–67 (AYAPKDPWSTLTPSATYKGGITDYSSSFGIAIEAVATSASSVASSKAKR). 8 PIR1/2/3 repeats span residues 68-91 (AASQ…KKST), 92-109 (AAAV…AKST), 110-127 (AAAV…AKST), 128-145 (AAAV…AKST), 146-163 (AAAV…AKST), 164-181 (AAAA…TTST), 182-199 (KAAA…SKTT), and 200-217 (SGAS…AEVK).

Belongs to the PIR protein family. In terms of processing, covalently linked to beta-1,3-glucan of the inner cell wall layer via an alkali-sensitive ester linkage between the gamma-carboxyl group of glutamic acids, arising from specific glutamines within the PIR1/2/3 repeats, and hydroxyl groups of glucoses of beta-1,3-glucan chains. Post-translationally, O-glycosylated. Extensively O-mannosylated.

Its subcellular location is the secreted. The protein localises to the cell wall. Its function is as follows. Component of the outer cell wall layer. Required for stability of the cell wall and for optimal growth. Required for resistance against several antifungal and cell wall-perturbing agents. The polypeptide is Cell wall mannoprotein PIR3 (PIR3) (Saccharomyces cerevisiae (strain ATCC 204508 / S288c) (Baker's yeast)).